We begin with the raw amino-acid sequence, 403 residues long: Phosphoglycerate kinase (403 aa).

Substrate-binding positions include aspartate 21 to asparagine 23, arginine 36, histidine 59 to arginine 62, arginine 119, and arginine 154. ATP is bound by residues lysine 207, glycine 299, glutamate 330, and glycine 357–alanine 360.

It belongs to the phosphoglycerate kinase family. In terms of assembly, monomer.

The protein resides in the cytoplasm. The catalysed reaction is (2R)-3-phosphoglycerate + ATP = (2R)-3-phospho-glyceroyl phosphate + ADP. It functions in the pathway carbohydrate degradation; glycolysis; pyruvate from D-glyceraldehyde 3-phosphate: step 2/5. The polypeptide is Phosphoglycerate kinase (Chlamydia abortus (strain DSM 27085 / S26/3) (Chlamydophila abortus)).